Here is a 339-residue protein sequence, read N- to C-terminus: Transposase for insertion sequence element IS1086 (339 aa).

The Integrase catalytic domain occupies 176–329; sequence DRLMPGHWEG…SPLQVLAQVL (154 aa).

This sequence belongs to the transposase IS30 family.

Its function is as follows. Required for the transposition of the insertion element. The protein is Transposase for insertion sequence element IS1086 (IS1086) of Cupriavidus metallidurans (strain ATCC 43123 / DSM 2839 / NBRC 102507 / CH34) (Ralstonia metallidurans).